Consider the following 789-residue polypeptide: ATP-dependent 6-phosphofructokinase (789 aa).

Residues 1 to 404 (MSLKRNIRRL…NLETYKLLTK (404 aa)) form an N-terminal catalytic PFK domain 1 region. Residues G41, 104–105 (RC), and 134–137 (GDGS) contribute to the ATP site. A Mg(2+)-binding site is contributed by D135. Substrate-binding positions include 180–182 (SID), R217, 224–226 (MGR), E280, R307, and 313–316 (HVQR). Residue D182 is the Proton acceptor of the active site. The interval 405 to 419 (LRTVEKDNLSGGQNF) is interdomain linker. Positions 420–789 (NVAVMNVGAP…EAMEDTEDYD (370 aa)) are C-terminal regulatory PFK domain 2. Beta-D-fructose 2,6-bisphosphate is bound by residues K489, 547-551 (TISNN), R585, 592-594 (MGG), E647, R673, 679-682 (HAQQ), and R753.

It belongs to the phosphofructokinase type A (PFKA) family. ATP-dependent PFK group I subfamily. Eukaryotic two domain clade 'E' sub-subfamily. As to quaternary structure, homotetramer. Requires Mg(2+) as cofactor.

The protein localises to the cytoplasm. The enzyme catalyses beta-D-fructose 6-phosphate + ATP = beta-D-fructose 1,6-bisphosphate + ADP + H(+). Its pathway is carbohydrate degradation; glycolysis; D-glyceraldehyde 3-phosphate and glycerone phosphate from D-glucose: step 3/4. Its activity is regulated as follows. Allosterically activated by ADP, AMP, or fructose 2,6-bisphosphate, and allosterically inhibited by ATP or citrate. In terms of biological role, catalyzes the phosphorylation of D-fructose 6-phosphate to fructose 1,6-bisphosphate by ATP, the first committing step of glycolysis. The protein is ATP-dependent 6-phosphofructokinase (PFK) of Haemonchus contortus (Barber pole worm).